The sequence spans 259 residues: Global transcriptional regulator CodY (259 aa).

The interval 1–155 (MELLAKTRKL…SSTVVGMEIL (155 aa)) is GAF domain. The segment at residues 203-222 (ASKIADRVGITRSVIVNALR) is a DNA-binding region (H-T-H motif). At Ser215 the chain carries Phosphoserine.

It belongs to the CodY family.

The protein resides in the cytoplasm. In terms of biological role, DNA-binding global transcriptional regulator which is involved in the adaptive response to starvation and acts by directly or indirectly controlling the expression of numerous genes in response to nutrient availability. During rapid exponential growth, CodY is highly active and represses genes whose products allow adaptation to nutrient depletion. The polypeptide is Global transcriptional regulator CodY (Bacillus cereus (strain ATCC 10987 / NRS 248)).